Reading from the N-terminus, the 291-residue chain is Undecaprenyl-diphosphatase (291 aa).

The next 8 helical transmembrane spans lie at 1–21, 48–68, 102–122, 126–146, 162–182, 203–223, 231–251, and 267–287; these read MFII…LTEF, SAFT…AWVF, LHVL…DDFI, LFSV…MIIA, INYF…WPGF, SDFT…LSLL, IADI…GLIA, and FAIY…GFGI.

The protein belongs to the UppP family.

It localises to the cell membrane. The catalysed reaction is di-trans,octa-cis-undecaprenyl diphosphate + H2O = di-trans,octa-cis-undecaprenyl phosphate + phosphate + H(+). Functionally, catalyzes the dephosphorylation of undecaprenyl diphosphate (UPP). Confers resistance to bacitracin. The polypeptide is Undecaprenyl-diphosphatase (Staphylococcus aureus (strain Mu3 / ATCC 700698)).